A 402-amino-acid polypeptide reads, in one-letter code: Arginine biosynthesis bifunctional protein ArgJ (402 aa).

Residues threonine 152, lysine 178, threonine 189, glutamate 275, asparagine 397, and threonine 402 each coordinate substrate. The active-site Nucleophile is the threonine 189.

The protein belongs to the ArgJ family. As to quaternary structure, heterotetramer of two alpha and two beta chains.

Its subcellular location is the cytoplasm. It catalyses the reaction N(2)-acetyl-L-ornithine + L-glutamate = N-acetyl-L-glutamate + L-ornithine. The enzyme catalyses L-glutamate + acetyl-CoA = N-acetyl-L-glutamate + CoA + H(+). It functions in the pathway amino-acid biosynthesis; L-arginine biosynthesis; L-ornithine and N-acetyl-L-glutamate from L-glutamate and N(2)-acetyl-L-ornithine (cyclic): step 1/1. It participates in amino-acid biosynthesis; L-arginine biosynthesis; N(2)-acetyl-L-ornithine from L-glutamate: step 1/4. Its function is as follows. Catalyzes two activities which are involved in the cyclic version of arginine biosynthesis: the synthesis of N-acetylglutamate from glutamate and acetyl-CoA as the acetyl donor, and of ornithine by transacetylation between N(2)-acetylornithine and glutamate. The chain is Arginine biosynthesis bifunctional protein ArgJ from Symbiobacterium thermophilum (strain DSM 24528 / JCM 14929 / IAM 14863 / T).